The primary structure comprises 406 residues: 26S proteasome regulatory subunit 8 (406 aa).

The residue at position 2 (Ala-2) is an N-acetylalanine. The residue at position 120 (Ser-120) is a Phosphoserine. The tract at residues 186-406 (VLLYGPPGTG…KNMSIKKLWK (221 aa)) is may mediate interaction with PRPF9. 190–197 (GPPGTGKT) serves as a coordination point for ATP. Lys-222 carries the N6-acetyllysine modification.

The protein belongs to the AAA ATPase family. As to quaternary structure, component of the 19S proteasome regulatory particle complex. The 26S proteasome consists of a 20S core particle (CP) and two 19S regulatory subunits (RP). The regulatory particle is made of a lid composed of 9 subunits, a base containing 6 ATPases including PSMC5 and few additional components. Component of a complex with USP49 and RUVBL1. Interacts with PRPF19. Interacts with TRIM5. Interacts with NDC80. Interacts with PAAF1. Interacts, in vitro, with the thyroid hormone receptor (in a thyroid hormone T3-dependent manner) and with retinoid X receptor (RXR). Interacts with ERCC6.

It localises to the cytoplasm. Its subcellular location is the nucleus. Functionally, component of the 26S proteasome, a multiprotein complex involved in the ATP-dependent degradation of ubiquitinated proteins. This complex plays a key role in the maintenance of protein homeostasis by removing misfolded or damaged proteins, which could impair cellular functions, and by removing proteins whose functions are no longer required. Therefore, the proteasome participates in numerous cellular processes, including cell cycle progression, apoptosis, or DNA damage repair. PSMC5 belongs to the heterohexameric ring of AAA (ATPases associated with diverse cellular activities) proteins that unfolds ubiquitinated target proteins that are concurrently translocated into a proteolytic chamber and degraded into peptides. This is 26S proteasome regulatory subunit 8 (PSMC5) from Bos taurus (Bovine).